We begin with the raw amino-acid sequence, 123 residues long: UPF0102 protein APJL_1381 (123 aa).

The protein belongs to the UPF0102 family.

The protein is UPF0102 protein APJL_1381 of Actinobacillus pleuropneumoniae serotype 3 (strain JL03).